Here is a 285-residue protein sequence, read N- to C-terminus: Extracellular metalloprotease NCU07200 (285 aa).

The N-terminal stretch at 1–18 (MQIKSFLLAAAAAPAALG) is a signal peptide. His-197 lines the Zn(2+) pocket. The active site involves Glu-198. His-201 serves as a coordination point for Zn(2+). A disulfide bridge connects residues Cys-233 and Cys-260. Asn-282 carries an N-linked (GlcNAc...) asparagine glycan.

It belongs to the peptidase M43B family.

The protein localises to the secreted. Secreted metalloproteinase that allows assimilation of proteinaceous substrates. This Neurospora crassa (strain ATCC 24698 / 74-OR23-1A / CBS 708.71 / DSM 1257 / FGSC 987) protein is Extracellular metalloprotease NCU07200.